The following is an 85-amino-acid chain: Protein WIR1B (85 aa).

Over 1–12 (MASHSAAGRRPT) the chain is Cytoplasmic. The chain crosses the membrane as a helical span at residues 13–34 (ALVHIALFVAIAAVIINSSVCL). Residues 35–85 (GAAVHDAATSGTGALDPNVPAVPTPGGAGQPYTGRGCRTVYGCKPPAGSQP) are Extracellular-facing.

The protein localises to the membrane. Functionally, associated with pathogen defense. In Triticum aestivum (Wheat), this protein is Protein WIR1B (WIR1B).